Here is a 441-residue protein sequence, read N- to C-terminus: tRNA(Ile)-lysidine synthase (441 aa).

An ATP-binding site is contributed by Ser-28–Ser-33.

Belongs to the tRNA(Ile)-lysidine synthase family.

It localises to the cytoplasm. It carries out the reaction cytidine(34) in tRNA(Ile2) + L-lysine + ATP = lysidine(34) in tRNA(Ile2) + AMP + diphosphate + H(+). Ligates lysine onto the cytidine present at position 34 of the AUA codon-specific tRNA(Ile) that contains the anticodon CAU, in an ATP-dependent manner. Cytidine is converted to lysidine, thus changing the amino acid specificity of the tRNA from methionine to isoleucine. The sequence is that of tRNA(Ile)-lysidine synthase from Orientia tsutsugamushi (strain Boryong) (Rickettsia tsutsugamushi).